The following is a 183-amino-acid chain: Porphobilinogen deaminase (183 aa).

This sequence belongs to the HMBS family. As to quaternary structure, monomer. The cofactor is dipyrromethane.

The catalysed reaction is 4 porphobilinogen + H2O = hydroxymethylbilane + 4 NH4(+). The protein operates within porphyrin-containing compound metabolism; protoporphyrin-IX biosynthesis; coproporphyrinogen-III from 5-aminolevulinate: step 2/4. Tetrapolymerization of the monopyrrole PBG into the hydroxymethylbilane pre-uroporphyrinogen in several discrete steps. This Yersinia intermedia protein is Porphobilinogen deaminase (hemC).